A 166-amino-acid polypeptide reads, in one-letter code: Thiamine precursor transporter HmpT (166 aa).

5 helical membrane passes run 14-34, 35-55, 62-82, 105-125, and 126-146; these read LLAI…FPIP, GSAG…VFLF, IIGG…NYMF, FLLS…LMYG, and WGSA…GFVL.

In E.coli forms a stable energy-coupling factor (ECF) transporter complex composed of 2 membrane-embedded substrate-binding protein (S component), 2 ATP-binding proteins (A and A' components) and 2 transmembrane proteins (T component), probably with a stoichiometry of 2:1:1:2. May be able to interact with more than 1 S component at a time.

Its subcellular location is the cell membrane. Functionally, probably a thiamine precursor-binding protein that interacts with the energy-coupling factor (ECF) ABC-transporter complex. Unlike classic ABC transporters this ECF transporter provides the energy necessary to transport a number of different substrates. The substrates themselves are bound by transmembrane, not extracytoplasmic soluble proteins. In Lactococcus lactis subsp. cremoris (strain MG1363), this protein is Thiamine precursor transporter HmpT (hmpT).